A 302-amino-acid chain; its full sequence is Pyridoxal 5'-phosphate synthase subunit PdxS (302 aa).

Asp32 contributes to the D-ribose 5-phosphate binding site. The active-site Schiff-base intermediate with D-ribose 5-phosphate is the Lys89. Gly161 lines the D-ribose 5-phosphate pocket. Arg173 contacts D-glyceraldehyde 3-phosphate. D-ribose 5-phosphate is bound by residues Gly222 and 243-244 (GS). The disordered stretch occupies residues 275-302 (IAKNPGKGMKGQANADLDEEEQLQGRGV).

It belongs to the PdxS/SNZ family. In the presence of PdxT, forms a dodecamer of heterodimers.

The catalysed reaction is aldehydo-D-ribose 5-phosphate + D-glyceraldehyde 3-phosphate + L-glutamine = pyridoxal 5'-phosphate + L-glutamate + phosphate + 3 H2O + H(+). The protein operates within cofactor biosynthesis; pyridoxal 5'-phosphate biosynthesis. In terms of biological role, catalyzes the formation of pyridoxal 5'-phosphate from ribose 5-phosphate (RBP), glyceraldehyde 3-phosphate (G3P) and ammonia. The ammonia is provided by the PdxT subunit. Can also use ribulose 5-phosphate and dihydroxyacetone phosphate as substrates, resulting from enzyme-catalyzed isomerization of RBP and G3P, respectively. The polypeptide is Pyridoxal 5'-phosphate synthase subunit PdxS (Haloarcula marismortui (strain ATCC 43049 / DSM 3752 / JCM 8966 / VKM B-1809) (Halobacterium marismortui)).